The chain runs to 538 residues: Low affinity inorganic phosphate transporter 3 (538 aa).

Residues 1 to 24 (MAKDQLQVLNALDVAKTQLYHFTA) lie on the Cytoplasmic side of the membrane. A helical transmembrane segment spans residues 25–45 (IVIAGMGFFTDAYDLFCISLV). The Extracellular segment spans residues 46–70 (TKLLGRIYYFHEGAPKPGILPSGIS). The chain crosses the membrane as a helical span at residues 71-91 (AAVNGVAFIGTLSGQLFFGWL). The Cytoplasmic portion of the chain corresponds to 92–99 (GDKLGRKK). A helical transmembrane segment spans residues 100 to 120 (VYGMTLMLMVICSIACGLSFG). Residues 121 to 122 (KT) lie on the Extracellular side of the membrane. A helical transmembrane segment spans residues 123–143 (ANGVIATLCFFRFWLGFGIGG). At 144–164 (DYPLSATIMSEYANKKTRGAF) the chain is on the cytoplasmic side. Residues 165-185 (IAAVFAMQGFGILAGGIVALI) form a helical membrane-spanning segment. Over 186–211 (VSAGFKNAYPAPTYSAHGKDSTPPEA) the chain is Extracellular. A helical membrane pass occupies residues 212–232 (DYVWRIIVMIGALPALLTYYW). Topologically, residues 233-292 (RMKMPETARYTALVAKNTVKAAADMSKVLNVEIEEDKATVEKIEENGNSFGLFSKEFLRR) are cytoplasmic. Residues 293-313 (HGLHLLGTTSTWFLLDIAFYS) traverse the membrane as a helical segment. At 314-345 (QNLFQKDIFSKIGWIPPPETMNALDEVFRIAR) the chain is on the extracellular side. The chain crosses the membrane as a helical span at residues 346–366 (AQTLIALCSTVPGYWFTVAFI). Residues 367–371 (DKMGR) are Cytoplasmic-facing. The chain crosses the membrane as a helical span at residues 372-392 (FAIQLMGSFFMTVFMFALAIP). Residues 393–402 (YDHWTKKENR) lie on the Extracellular side of the membrane. Residues 403-423 (IGFVIMYSLTFFFANFGPNAT) form a helical membrane-spanning segment. At 424 to 442 (TFVVPAEIFPARLRSTCHG) the chain is on the cytoplasmic side. The chain crosses the membrane as a helical span at residues 443–463 (ISAAAGKAGAIVGAFGFLYAA). At 464–483 (QSTDPKKVDAGYPTGIGVKN) the chain is on the extracellular side. Residues 484-504 (ALIVLGCVNFLGMLSTLLVPE) traverse the membrane as a helical segment. At 505–538 (SKGKSLEEMSKENEGEEENYGTETKGENAQTVPV) the chain is on the cytoplasmic side. Positions 506–517 (KGKSLEEMSKEN) are enriched in basic and acidic residues. Residues 506–538 (KGKSLEEMSKENEGEEENYGTETKGENAQTVPV) form a disordered region.

It belongs to the major facilitator superfamily. Phosphate:H(+) symporter (TC 2.A.1.9) family. Expressed at low levels in non-mycorrhized roots.

The protein resides in the cell membrane. It carries out the reaction phosphate(in) + H(+)(in) = phosphate(out) + H(+)(out). Its function is as follows. Low-affinity transporter for external inorganic phosphate (Pi) probably involved in the acquisition of phosphate released by arbuscular mycorrhizal (AM) fungi during AM symbiosis. This Petunia hybrida (Petunia) protein is Low affinity inorganic phosphate transporter 3.